The primary structure comprises 427 residues: 3-phosphoshikimate 1-carboxyvinyltransferase (427 aa).

3 residues coordinate 3-phosphoshikimate: Lys-22, Ser-23, and Arg-27. Lys-22 provides a ligand contact to phosphoenolpyruvate. Gly-96 and Arg-124 together coordinate phosphoenolpyruvate. Ser-169, Ser-170, Gln-171, Ser-197, Asp-313, Asn-336, and Lys-340 together coordinate 3-phosphoshikimate. Gln-171 is a phosphoenolpyruvate binding site. Asp-313 functions as the Proton acceptor in the catalytic mechanism. Phosphoenolpyruvate contacts are provided by Arg-344, Arg-386, and Lys-411.

This sequence belongs to the EPSP synthase family. Monomer.

It is found in the cytoplasm. It catalyses the reaction 3-phosphoshikimate + phosphoenolpyruvate = 5-O-(1-carboxyvinyl)-3-phosphoshikimate + phosphate. The protein operates within metabolic intermediate biosynthesis; chorismate biosynthesis; chorismate from D-erythrose 4-phosphate and phosphoenolpyruvate: step 6/7. Functionally, catalyzes the transfer of the enolpyruvyl moiety of phosphoenolpyruvate (PEP) to the 5-hydroxyl of shikimate-3-phosphate (S3P) to produce enolpyruvyl shikimate-3-phosphate and inorganic phosphate. In Klebsiella pneumoniae subsp. pneumoniae (strain ATCC 700721 / MGH 78578), this protein is 3-phosphoshikimate 1-carboxyvinyltransferase.